We begin with the raw amino-acid sequence, 221 residues long: Casparian strip membrane protein 3 (221 aa).

Residues 1–12 (MDIEKAASRREE) show a composition bias toward basic and acidic residues. Residues 1 to 28 (MDIEKAASRREEEEPIVQRPKLDKGKGK) are disordered. The Cytoplasmic segment spans residues 1 to 58 (MDIEKAASRREEEEPIVQRPKLDKGKGKAHVFAPPMNYNRIMDKHKQEKVSAAGWKRG). The helical transmembrane segment at 59–79 (VAIFDFVLRLIAAITAMAAAA) threads the bilayer. Residues 80–109 (KMATTEETLPFFTQFLQFQAEYTDLPTMSS) are Extracellular-facing. The chain crosses the membrane as a helical span at residues 110-130 (FVIVNSIVGGYLTLSLPFSIV). At 131–148 (CILRPLAVPPRLFLIICD) the chain is on the cytoplasmic side. The chain crosses the membrane as a helical span at residues 149–169 (TAMMGLTMMAASASAAIVYLA). The Extracellular portion of the chain corresponds to 170-194 (HNGNSSSNWLPVCQQFGDFCQGTSG). A glycan (N-linked (GlcNAc...) asparagine) is linked at asparagine 173. A helical membrane pass occupies residues 195 to 215 (AVVASFIAATLLMFLVILSAF). Residues 216–221 (ALKRST) lie on the Cytoplasmic side of the membrane.

This sequence belongs to the Casparian strip membrane proteins (CASP) family. In terms of assembly, homodimer and heterodimers.

Its subcellular location is the cell membrane. In terms of biological role, regulates membrane-cell wall junctions and localized cell wall deposition. Required for establishment of the Casparian strip membrane domain (CSD) and the subsequent formation of Casparian strips, a cell wall modification of the root endodermis that determines an apoplastic barrier between the intraorganismal apoplasm and the extraorganismal apoplasm and prevents lateral diffusion. This chain is Casparian strip membrane protein 3, found in Arabidopsis lyrata subsp. lyrata (Lyre-leaved rock-cress).